The sequence spans 196 residues: ATP-dependent Clp protease proteolytic subunit (196 aa).

The active-site Nucleophile is the serine 96. Residue histidine 121 is part of the active site.

It belongs to the peptidase S14 family. Fourteen ClpP subunits assemble into 2 heptameric rings which stack back to back to give a disk-like structure with a central cavity, resembling the structure of eukaryotic proteasomes.

The protein resides in the cytoplasm. It catalyses the reaction Hydrolysis of proteins to small peptides in the presence of ATP and magnesium. alpha-casein is the usual test substrate. In the absence of ATP, only oligopeptides shorter than five residues are hydrolyzed (such as succinyl-Leu-Tyr-|-NHMec, and Leu-Tyr-Leu-|-Tyr-Trp, in which cleavage of the -Tyr-|-Leu- and -Tyr-|-Trp bonds also occurs).. Functionally, cleaves peptides in various proteins in a process that requires ATP hydrolysis. Has a chymotrypsin-like activity. Plays a major role in the degradation of misfolded proteins. This Streptococcus equi subsp. zooepidemicus (strain H70) protein is ATP-dependent Clp protease proteolytic subunit.